A 388-amino-acid chain; its full sequence is Pepsin A-2/A-3 (388 aa).

The signal sequence occupies residues 1-15 (MKWLLLLGLVALSEC). 2 propeptides (activation peptide) span residues 16 to 40 (IIHKVPLVRKKSLRRNLSEHGLLKD) and 41 to 62 (FLKKHNFNPASKYFPQAEAPTL). One can recognise a Peptidase A1 domain in the interval 76 to 385 (YFGTIGIGTP…DRANNQVGLA (310 aa)). The active site involves aspartate 94. A disulfide bridge links cysteine 107 with cysteine 112. Serine 130 is modified (phosphoserine). The cysteines at positions 268 and 272 are disulfide-linked. Aspartate 277 is a catalytic residue. Cysteine 311 and cysteine 344 are oxidised to a cystine.

The protein belongs to the peptidase A1 family. Pepsin A-2 is phosphorylated, but not pepsin A-3. Post-translationally, each pepsinogen is converted to corresponding pepsin at pH 2.0 in part as a result of the release of a 47 AA activation segment and in part as a result of stepwise proteolytic cleavage via an intermediate form(s).

The protein resides in the secreted. The enzyme catalyses Preferential cleavage: hydrophobic, preferably aromatic, residues in P1 and P1' positions. Cleaves 1-Phe-|-Val-2, 4-Gln-|-His-5, 13-Glu-|-Ala-14, 14-Ala-|-Leu-15, 15-Leu-|-Tyr-16, 16-Tyr-|-Leu-17, 23-Gly-|-Phe-24, 24-Phe-|-Phe-25 and 25-Phe-|-Tyr-26 bonds in the B chain of insulin.. In terms of biological role, shows particularly broad specificity; although bonds involving phenylalanine and leucine are preferred, many others are also cleaved to some extent. The polypeptide is Pepsin A-2/A-3 (Macaca fuscata fuscata (Japanese macaque)).